Reading from the N-terminus, the 630-residue chain is tRNA uridine 5-carboxymethylaminomethyl modification enzyme MnmG (630 aa).

15 to 20 is an FAD binding site; that stretch reads GAGHAG. 274-288 provides a ligand contact to NAD(+); that stretch reads GPRYCPSIEDKIVRF.

It belongs to the MnmG family. As to quaternary structure, homodimer. Heterotetramer of two MnmE and two MnmG subunits. FAD is required as a cofactor.

Its subcellular location is the cytoplasm. Functionally, NAD-binding protein involved in the addition of a carboxymethylaminomethyl (cmnm) group at the wobble position (U34) of certain tRNAs, forming tRNA-cmnm(5)s(2)U34. This is tRNA uridine 5-carboxymethylaminomethyl modification enzyme MnmG from Alkaliphilus oremlandii (strain OhILAs) (Clostridium oremlandii (strain OhILAs)).